Consider the following 50-residue polypeptide: U23-theraphotoxin-Cg1a 2 (50 aa).

3 disulfides stabilise this stretch: Cys22/Cys36, Cys29/Cys41, and Cys35/Cys47.

It belongs to the neurotoxin 10 (Hwtx-1) family. 64 (Jztx-20) subfamily. Expressed by the venom gland.

It localises to the secreted. Probable ion channel inhibitor. The polypeptide is U23-theraphotoxin-Cg1a 2 (Chilobrachys guangxiensis (Chinese earth tiger tarantula)).